The chain runs to 644 residues: Threonine--tRNA ligase (644 aa).

A TGS domain is found at 1 to 61 (MKVSIEGSVV…TACETLEPVY (61 aa)). The segment at 241-532 (DHRKLGTQLD…LTEHFAGAFP (292 aa)) is catalytic. The Zn(2+) site is built by Cys-333, His-384, and His-509.

This sequence belongs to the class-II aminoacyl-tRNA synthetase family. Homodimer. The cofactor is Zn(2+).

It is found in the cytoplasm. It carries out the reaction tRNA(Thr) + L-threonine + ATP = L-threonyl-tRNA(Thr) + AMP + diphosphate + H(+). Its function is as follows. Catalyzes the attachment of threonine to tRNA(Thr) in a two-step reaction: L-threonine is first activated by ATP to form Thr-AMP and then transferred to the acceptor end of tRNA(Thr). Also edits incorrectly charged L-seryl-tRNA(Thr). The polypeptide is Threonine--tRNA ligase (Oleidesulfovibrio alaskensis (strain ATCC BAA-1058 / DSM 17464 / G20) (Desulfovibrio alaskensis)).